The chain runs to 439 residues: Ribosomal protein uS12 methylthiotransferase RimO (439 aa).

One can recognise an MTTase N-terminal domain in the interval 7-119; that stretch reads KQLCLISLGC…IDIMIAKKQN (113 aa). Positions 16, 50, 82, 151, 155, and 158 each coordinate [4Fe-4S] cluster. In terms of domain architecture, Radical SAM core spans 137–368; it reads TGSSVHAYVK…ALKHQNHSFK (232 aa).

Belongs to the methylthiotransferase family. RimO subfamily. It depends on [4Fe-4S] cluster as a cofactor.

It localises to the cytoplasm. It catalyses the reaction L-aspartate(89)-[ribosomal protein uS12]-hydrogen + (sulfur carrier)-SH + AH2 + 2 S-adenosyl-L-methionine = 3-methylsulfanyl-L-aspartate(89)-[ribosomal protein uS12]-hydrogen + (sulfur carrier)-H + 5'-deoxyadenosine + L-methionine + A + S-adenosyl-L-homocysteine + 2 H(+). In terms of biological role, catalyzes the methylthiolation of an aspartic acid residue of ribosomal protein uS12. The chain is Ribosomal protein uS12 methylthiotransferase RimO from Helicobacter pylori (strain P12).